A 1016-amino-acid chain; its full sequence is MQDKLIVRGAREHNLKDITVELPRDRFVVITGVSGSGKSTLAFDTIYAEGQRRYVESLSAYARQFLGLMEKPDVDSITGLSPAISIDQKTTSHNPRSTVGTVTEIHDYLRLLYARVGTPYCPICGRKIEKQSPSEVTDRLLAGFPDKRAILLAPAVRGRKGEYKKLFADLRREGYARVRVDGTLYELEEAEKLKLEKFEKHDVDIVIDRLTLRESDRSRIAESVELGIRRGEGLLRVLLPDAGEDGGAHEELYSEKFACPEHGSVLEELEPRSFSFNSPYGACGDCAGIGAKQEFSPERIIDEKLSIAGGAIIPWTKKGADAGIYYWDKLKALAEHLDFDLKTPWKDLPAKAQKAVLHGPGEAFEVVYRRGGKETMRFMTEFEGVITNLERRYADTESEFMRERLEELMELRPCPTCGGTRYKPEILAVRVGGLNISQTSGMSVLDADAFFQQLQEGELDHAAIEPFLKRHTGGTAKAHGPLHYEYDLGTFGAAVAAPILRAIRTRLKFLVDVGLDYLSLDRTANTLSGGEAQRIRLATQVGSGLTGVLYVLDEPSIGLHPKDNGRLIGTLKNLRDLGNSLLVVEHDEDTMLEADYLIDMGPGAGVHGGEVIASGTPEQVKQDKNSLTGKYLRGEMKIEVPAERRPGNGKFLKVFGARQNNLQDVDVSIPLGTMTVVTGPSGSGKSTLIHDILHATLARELNGAKTTPGLYDRIEGMEQLDKVIEIDQSPIGRTPRSNPATYTGVFTEIRDLFTRTPEARRRGYQAGRFSFNVKGGRCEHCKGDGVMKIEMNFLPDIYVPCEVCHGARYNRETLEVKYNHKTIADVLDLTVEDAHEFFEAIPTIERKMQLLLDVGLGYMKIGQPSTTLSGGEAQRIKLATELSKRATGRTIYILDEPTTGLHFEDVRKLMDVLQRLAEGGNTLVIIEHNLDVMKSADYLIDLGPEGGVRGGTVVAVGTPEEVAAHPTSYTGEYLRKVPGIVAAEPRARGEKAEKPAKAKAPAKKRTKKQTELVEAD.

Residue 32–39 (GVSGSGKS) participates in ATP binding. The C4-type zinc-finger motif lies at 259-286 (CPEHGSVLEELEPRSFSFNSPYGACGDC). ABC transporter domains lie at 315–627 (WTKK…KNSL) and 647–975 (GNGK…EYLR). 679–686 (GPSGSGKS) contributes to the ATP binding site. The C4-type zinc finger occupies 778–804 (CEHCKGDGVMKIEMNFLPDIYVPCEVC). A disordered region spans residues 984–1016 (EPRARGEKAEKPAKAKAPAKKRTKKQTELVEAD). Over residues 985–996 (PRARGEKAEKPA) the composition is skewed to basic and acidic residues.

This sequence belongs to the ABC transporter superfamily. UvrA family. Forms a heterotetramer with UvrB during the search for lesions.

The protein resides in the cytoplasm. The UvrABC repair system catalyzes the recognition and processing of DNA lesions. UvrA is an ATPase and a DNA-binding protein. A damage recognition complex composed of 2 UvrA and 2 UvrB subunits scans DNA for abnormalities. When the presence of a lesion has been verified by UvrB, the UvrA molecules dissociate. This Deinococcus radiodurans (strain ATCC 13939 / DSM 20539 / JCM 16871 / CCUG 27074 / LMG 4051 / NBRC 15346 / NCIMB 9279 / VKM B-1422 / R1) protein is UvrABC system protein A.